The chain runs to 122 residues: Phosphoribosyl-ATP pyrophosphatase (122 aa).

Belongs to the PRA-PH family.

The protein resides in the cytoplasm. It carries out the reaction 1-(5-phospho-beta-D-ribosyl)-ATP + H2O = 1-(5-phospho-beta-D-ribosyl)-5'-AMP + diphosphate + H(+). It functions in the pathway amino-acid biosynthesis; L-histidine biosynthesis; L-histidine from 5-phospho-alpha-D-ribose 1-diphosphate: step 2/9. This is Phosphoribosyl-ATP pyrophosphatase from Cupriavidus metallidurans (strain ATCC 43123 / DSM 2839 / NBRC 102507 / CH34) (Ralstonia metallidurans).